The primary structure comprises 311 residues: Acetyl-coenzyme A carboxylase carboxyl transferase subunit alpha (311 aa).

The CoA carboxyltransferase C-terminal domain maps to 36–286; that stretch reads NLSKEISKVY…ANYFISELAE (251 aa).

The protein belongs to the AccA family. In terms of assembly, acetyl-CoA carboxylase is a heterohexamer composed of biotin carboxyl carrier protein (AccB), biotin carboxylase (AccC) and two subunits each of ACCase subunit alpha (AccA) and ACCase subunit beta (AccD).

The protein resides in the cytoplasm. The enzyme catalyses N(6)-carboxybiotinyl-L-lysyl-[protein] + acetyl-CoA = N(6)-biotinyl-L-lysyl-[protein] + malonyl-CoA. Its pathway is lipid metabolism; malonyl-CoA biosynthesis; malonyl-CoA from acetyl-CoA: step 1/1. In terms of biological role, component of the acetyl coenzyme A carboxylase (ACC) complex. First, biotin carboxylase catalyzes the carboxylation of biotin on its carrier protein (BCCP) and then the CO(2) group is transferred by the carboxyltransferase to acetyl-CoA to form malonyl-CoA. The polypeptide is Acetyl-coenzyme A carboxylase carboxyl transferase subunit alpha (Campylobacter concisus (strain 13826)).